Consider the following 337-residue polypeptide: UPF0252 protein PH1321 (337 aa).

Residues 100–120 (IIGMLFLVFIILPAITSNLWS) form a helical membrane-spanning segment.

The protein belongs to the UPF0252 family.

Its subcellular location is the membrane. This is UPF0252 protein PH1321 from Pyrococcus horikoshii (strain ATCC 700860 / DSM 12428 / JCM 9974 / NBRC 100139 / OT-3).